Here is a 3289-residue protein sequence, read N- to C-terminus: tRNA nuclease CdiA (3289 aa).

An N-terminal signal peptide occupies residues 1-32 (MHQPPVRFTYRLLSYLISTIIAGQPLLPAVGA). The segment at 36–322 (PQNGAGMDKA…AGGNLSVSSR (287 aa)) is two-partner system transport domain (TPS). The interval 351–1398 (EKLTAGRDVT…IVVRTGHLLN (1048 aa)) is FHA-1. Residues 595 to 615 (AVNASEKLTHSGKSSAPSLSL) are disordered. Positions 1399 to 1689 (QREGFSATTT…LTGQTGISDD (291 aa)) are receptor binding domain (RBD). The tract at residues 1690–1874 (WPLPSGNNGY…LSPEDITLHN (185 aa)) is YP domain. Residues 1875-1935 (GSVISGNNVQ…DLSAIGDISN (61 aa)) are periplasmic FHA-1 repeat (pFR). The FHA-2 stretch occupies residues 1979–2653 (TDTGPVATIK…TSKYDSKQTS (675 aa)). The span at 2097–2113 (RESKNSRNGRSESHESH) shows a compositional bias: basic and acidic residues. 3 disordered regions span residues 2097 to 2116 (RESK…HAAV), 2332 to 2356 (GSSK…TIGS), and 2466 to 2513 (TGDP…TGKN). Polar residues-rich tracts occupy residues 2344 to 2356 (GTTQ…TIGS) and 2472 to 2507 (TGVS…NLSV). The interval 2992 to 3034 (SDLSEEQKQTISTLATVSAGLAGGLTGNSTASAAVGAQSGKNA) is pretoxin (PT) domain. Residues 3035-3038 (VENN) carry the VENN CT cleavage motif motif. A C-terminal effector domain (CT); has tRNase activity region spans residues 3035-3289 (VENNYLSVSE…VGHIQPVKVK (255 aa)). The segment at 3039 to 3197 (YLSVSEKTEL…PLIGQAASNK (159 aa)) is inner membrane translocation domain (IMTD), targets protein to PtsG.

It in the N-terminal section; belongs to the CdiA toxin family. In terms of assembly, forms a contact-dependent growth inhibition complex of CdiA-CT-NC101, CdiI-NC101 and EF-Tu; the complex is a dimer of heterotrimers. Stable CdiA-CT-NC101, EF-Tu complexes are not detected, nor are complexes with EF-Ts.

It is found in the secreted. The protein resides in the target cell. The protein localises to the target cell cytoplasm. Toxic component of a toxin-immunity protein module, which functions as a cellular contact-dependent growth inhibition (CDI) system. CDI modules allow bacteria to communicate with and inhibit the growth of closely related neighboring bacteria in a contact-dependent fashion (target cell counts decrease about 10,0000-fold for this system). CdiA toxicity is neutralized by its cognate immunity protein CdiI-NC101, but not by CdiI from other bacteria. The C-terminal domain (CT) cleaves tRNA endonucleolytically at the 5' side of guanine discriminator nucleotide sites (removes the last 4 nucleotides of the tRNA acceptor arm when the first nucleotide to be removed is G). Requires EF-Ts (tsf) for toxic function of the CT domain in vivo. In vitro the CT tRNase activity requires both EF-Tu (tufA) and EF-Ts. EF-Ts probably increases steady-state GTP-EF-Tu-aa-tRNA substrate levels. The CT domain is thought to remodel this same complex to displace the 3'-end of the aa-tRNA and allow it to enter into the toxin active site. The CT domain gains access to the cytoplasm of target cells by using integral inner membrane protein PTS system glucose-specific EIICB component (ptsG). Functionally, the CdiA protein is thought to be exported from the cell through the central lumen of CdiB, the other half of its two-partner system (TPS). The TPS domain probably remains associated with CdiB while the FHA-1 domain forms an extended filament with the receptor-binding domain (RBD) at its extremity; in the secretion arrested state the C-terminus of the RBD and YP domains form a hairpin-like structure as the FHA-2, PT and CT domains are periplasmic. The YP domain is probably responsible for this arrest at the point where it re-enters the host cell periplasm. Upon binding to a target cell outer membrane receptor a signal is transmitted to activate secretion. The filament elongates slightly, the rest of CdiA is secreted and the FHA-2 domain becomes stably associated with the target cell's outer membrane where it facilitates entry of the toxic CT domain into the target cell periplasm. From there the toxic CT domain is cleaved and gains access to the target cell cytoplasm via an inner membrane protein (PtsG for this CDI). In Escherichia coli (strain NC101), this protein is tRNA nuclease CdiA.